We begin with the raw amino-acid sequence, 158 residues long: MNKTLIGHLDVSSSNLNNLAYKIYSTIKGMIENFDMVDKRAIVYMLKTYKEAFEITLSDFEFVLNELPTEDKLYPYIDYLVENLKYGFDALDELIYIVDREFDERNDNFKNLIKETLSFLQDITYCVHNWIKELRDMLTNTNQTEEEENSNDSESEED.

This is an uncharacterized protein from Acidianus convivator (ABV).